The primary structure comprises 496 residues: DEAD-box ATP-dependent RNA helicase 38 (496 aa).

The disordered stretch occupies residues 1-91 (MADTVEKVPT…SGDTPYTSAS (91 aa)). Alanine 2 bears the N-acetylalanine mark. Positions 7–25 (KVPTVVESSSSSTVEASNS) are enriched in low complexity. The segment covering 27 to 40 (EKTEPTTEKKKWGD) has biased composition (basic and acidic residues). Residues 41–51 (VEDDDDEEEAV) show a composition bias toward acidic residues. Over residues 78–91 (KAVTSGDTPYTSAS) the composition is skewed to polar residues. A Q motif motif is present at residues 91 to 120 (SRFEDLNLSPELMKGLYVEMKFEKPSKIQA). The Helicase ATP-binding domain occupies 125–301 (MIMTPPHKHL…ARTVKDPNQL (177 aa)). Residue 138–145 (AHNGSGKT) participates in ATP binding. Residues 245–248 (DEAD) carry the DEAD box motif. One can recognise a Helicase C-terminal domain in the interval 329–483 (VIKDQIMELG…EIKSWNSEEE (155 aa)).

This sequence belongs to the DEAD box helicase family. DDX19/DBP5 subfamily. Interacts with NUP214 (via N-terminus). Constitutively expressed.

It is found in the cytoplasm. It localises to the nucleus. It carries out the reaction ATP + H2O = ADP + phosphate + H(+). Its function is as follows. ATP-dependent RNA helicase essential for mRNA export from the nucleus. Plays an important role in the positive regulation of CBF/DREB transcription factors. This Arabidopsis thaliana (Mouse-ear cress) protein is DEAD-box ATP-dependent RNA helicase 38 (RH38).